We begin with the raw amino-acid sequence, 249 residues long: Small ribosomal subunit protein uS2 (249 aa).

This sequence belongs to the universal ribosomal protein uS2 family.

This Polynucleobacter asymbioticus (strain DSM 18221 / CIP 109841 / QLW-P1DMWA-1) (Polynucleobacter necessarius subsp. asymbioticus) protein is Small ribosomal subunit protein uS2.